A 119-amino-acid polypeptide reads, in one-letter code: Large ribosomal subunit protein bL20 (119 aa).

It belongs to the bacterial ribosomal protein bL20 family.

Binds directly to 23S ribosomal RNA and is necessary for the in vitro assembly process of the 50S ribosomal subunit. It is not involved in the protein synthesizing functions of that subunit. The sequence is that of Large ribosomal subunit protein bL20 from Streptococcus pneumoniae serotype 2 (strain D39 / NCTC 7466).